The chain runs to 420 residues: UDP-N-acetylglucosamine 1-carboxyvinyltransferase (420 aa).

22–23 contributes to the phosphoenolpyruvate binding site; the sequence is KN. Residue arginine 91 coordinates UDP-N-acetyl-alpha-D-glucosamine. The active-site Proton donor is cysteine 115. 2-(S-cysteinyl)pyruvic acid O-phosphothioketal is present on cysteine 115. UDP-N-acetyl-alpha-D-glucosamine-binding positions include 120–124, 160–163, aspartate 305, and isoleucine 327; these read RPVDL and KVSV.

The protein belongs to the EPSP synthase family. MurA subfamily.

It localises to the cytoplasm. It carries out the reaction phosphoenolpyruvate + UDP-N-acetyl-alpha-D-glucosamine = UDP-N-acetyl-3-O-(1-carboxyvinyl)-alpha-D-glucosamine + phosphate. Its pathway is cell wall biogenesis; peptidoglycan biosynthesis. In terms of biological role, cell wall formation. Adds enolpyruvyl to UDP-N-acetylglucosamine. This is UDP-N-acetylglucosamine 1-carboxyvinyltransferase from Erwinia tasmaniensis (strain DSM 17950 / CFBP 7177 / CIP 109463 / NCPPB 4357 / Et1/99).